The sequence spans 89 residues: Small ribosomal subunit protein uS15 (89 aa).

It belongs to the universal ribosomal protein uS15 family. Part of the 30S ribosomal subunit. Forms a bridge to the 50S subunit in the 70S ribosome, contacting the 23S rRNA.

In terms of biological role, one of the primary rRNA binding proteins, it binds directly to 16S rRNA where it helps nucleate assembly of the platform of the 30S subunit by binding and bridging several RNA helices of the 16S rRNA. Its function is as follows. Forms an intersubunit bridge (bridge B4) with the 23S rRNA of the 50S subunit in the ribosome. The polypeptide is Small ribosomal subunit protein uS15 (Hamiltonella defensa subsp. Acyrthosiphon pisum (strain 5AT)).